The chain runs to 309 residues: Uracil phosphoribosyltransferase homolog (309 aa).

Residues 1–41 (MATELQCPDSMPCHNQQVNSASTPSPEQLRPGDPILDHAGG) are disordered. Positions 13 to 26 (CHNQQVNSASTPSP) are enriched in polar residues. Ser25 carries the phosphoserine modification. Residues Arg133, Arg142, and 176–179 (EKGN) contribute to the GTP site. Arg186 contacts 5-phospho-alpha-D-ribose 1-diphosphate. GTP contacts are provided by Arg203 and Arg232. 238 to 246 (YPILSTGNT) lines the 5-phospho-alpha-D-ribose 1-diphosphate pocket. 299 to 301 (THF) contributes to the uracil binding site.

Belongs to the UPRTase family.

The protein localises to the cytoplasm. It localises to the nucleus. This Macaca fascicularis (Crab-eating macaque) protein is Uracil phosphoribosyltransferase homolog (UPRT).